Consider the following 261-residue polypeptide: MDPPLPSLHSPQWASLLQLHHGLMWLRRFAVLVRVYALVVFHIAISTAFCGMIWLGIPDSHNICQHESSPLLLVFAPSLLWCLVLIQGERHPDDVVLTMGYVGLLSVTTVFYTWCSDLPAILIDYTLVLTLWIACTGAVMVGDSFRAKRWELICSRVLTSVFFITLWVIGDQTVFHHQRILLYGYGAIVFLMMTVTFYGTRYIRDELPAAQTLRGSLLIYVGLVTMFKITLIVLSPNLWRLPWTTVFAAFRSSYCEGGGGS.

The next 7 membrane-spanning stretches (helical) occupy residues 37-57, 68-88, 95-115, 121-141, 150-170, 180-200, and 215-235; these read ALVV…WLGI, SSPL…LIQG, VVLT…YTWC, ILID…AVMV, WELI…WVIG, ILLY…FYGT, and GSLL…IVLS.

It belongs to the cytomegalovirus US12 family.

The protein localises to the membrane. This is an uncharacterized protein from Homo sapiens (Human).